The chain runs to 120 residues: Chaperonin GroEL (120 aa).

ATP is bound at residue 23–27 (DGTTT).

This sequence belongs to the chaperonin (HSP60) family. As to quaternary structure, forms a cylinder of 14 subunits composed of two heptameric rings stacked back-to-back. Interacts with the co-chaperonin GroES.

Its subcellular location is the cytoplasm. It carries out the reaction ATP + H2O + a folded polypeptide = ADP + phosphate + an unfolded polypeptide.. Its function is as follows. Together with its co-chaperonin GroES, plays an essential role in assisting protein folding. The GroEL-GroES system forms a nano-cage that allows encapsulation of the non-native substrate proteins and provides a physical environment optimized to promote and accelerate protein folding. In Mycolicibacter nonchromogenicus (Mycobacterium nonchromogenicum), this protein is Chaperonin GroEL.